We begin with the raw amino-acid sequence, 132 residues long: DNA-directed RNA polymerase subunit omega (132 aa).

It belongs to the RNA polymerase subunit omega family. In terms of assembly, the RNAP catalytic core consists of 2 alpha, 1 beta, 1 beta' and 1 omega subunit. When a sigma factor is associated with the core the holoenzyme is formed, which can initiate transcription.

The enzyme catalyses RNA(n) + a ribonucleoside 5'-triphosphate = RNA(n+1) + diphosphate. Functionally, promotes RNA polymerase assembly. Latches the N- and C-terminal regions of the beta' subunit thereby facilitating its interaction with the beta and alpha subunits. The chain is DNA-directed RNA polymerase subunit omega from Bartonella bacilliformis (strain ATCC 35685 / KC583 / Herrer 020/F12,63).